Here is a 241-residue protein sequence, read N- to C-terminus: 3-deoxy-D-manno-octulosonic acid kinase (241 aa).

Residue D171 is part of the active site.

It belongs to the protein kinase superfamily. KdkA/RfaP family.

The protein localises to the cell inner membrane. It catalyses the reaction an alpha-Kdo-(2-&gt;6)-lipid IVA + ATP = a 4-O-phospho-alpha-Kdo-(2-&gt;6)-lipid IVA + ADP + H(+). It functions in the pathway bacterial outer membrane biogenesis; LPS core biosynthesis. Its function is as follows. Catalyzes the ATP-dependent phosphorylation of the 3-deoxy-D-manno-octulosonic acid (Kdo) residue in Kdo-lipid IV(A) at the 4-OH position. This Haemophilus influenzae (strain 86-028NP) protein is 3-deoxy-D-manno-octulosonic acid kinase.